A 715-amino-acid polypeptide reads, in one-letter code: Probable ubiquitin thioesterase DG1039 (715 aa).

Positions 86–302 (KSRNEIKRKA…NNQTDDKLDN (217 aa)) form a coiled coil. Residues 287 to 302 (NKKLENNNQTDDKLDN) show a composition bias toward basic and acidic residues. Disordered stretches follow at residues 287–367 (NKKL…YNST), 398–450 (QYKQ…QQQY), and 502–527 (LAQSPAVNTPSITPTTNKPNIDSSEA). Residues 339-349 (TTAQLPLSITQ) show a composition bias toward polar residues. The span at 398–409 (QYKQQQQQQPIQ) shows a compositional bias: low complexity. Composition is skewed to polar residues over residues 410 to 427 (SPTNNINRPNIPQYNNYN) and 502 to 525 (LAQSPAVNTPSITPTTNKPNIDSS). In terms of domain architecture, MPN spans 537 to 666 (IIVHGEVFQE…IFRLTDPPGL (130 aa)). Residues His-615, His-617, Asp-628, His-630, Cys-672, His-678, and His-680 each contribute to the Zn(2+) site. The JAMM motif signature appears at 615-628 (HTHPTQDCFLSAVD).

This sequence belongs to the peptidase M67C family. Zn(2+) is required as a cofactor.

Functionally, may be a zinc metalloprotease that specifically cleaves ubiquitin chains. In Dictyostelium discoideum (Social amoeba), this protein is Probable ubiquitin thioesterase DG1039 (DG1039).